The following is a 312-amino-acid chain: Homoserine kinase (312 aa).

Residue 91–101 (PVASGLGSSAC) participates in ATP binding.

Belongs to the GHMP kinase family. Homoserine kinase subfamily.

It is found in the cytoplasm. It catalyses the reaction L-homoserine + ATP = O-phospho-L-homoserine + ADP + H(+). The protein operates within amino-acid biosynthesis; L-threonine biosynthesis; L-threonine from L-aspartate: step 4/5. Its function is as follows. Catalyzes the ATP-dependent phosphorylation of L-homoserine to L-homoserine phosphate. This Blochmanniella pennsylvanica (strain BPEN) protein is Homoserine kinase.